We begin with the raw amino-acid sequence, 373 residues long: Glutamine synthetase (373 aa).

Ala-2 bears the N-acetylalanine mark. Positions 2–25 (ATSASSHLNKGIKQMYMSLPQGEK) are required for glutamine-induced ubiquitination by CRL4(CRBN) and proteasomal degradation. Residues Lys-11 and Lys-14 each carry the N6-acetyllysine modification. Positions 24–106 (EKVQAMYIWV…VFCEVFKYNQ (83 aa)) constitute a GS beta-grasp domain. Phosphotyrosine is present on Tyr-104. The region spanning 113–373 (LRHTCKRIMD…TGDQPFQYKN (261 aa)) is the GS catalytic domain. Position 134 (Glu-134) interacts with ATP. Glu-134, Glu-136, Glu-196, and Glu-203 together coordinate Mn(2+). An ATP-binding site is contributed by 203–208 (EFQIGP). Residue 246–247 (NW) participates in L-glutamate binding. His-253 serves as a coordination point for Mn(2+). ATP contacts are provided by residues 255–257 (NFS), Arg-319, and Arg-324. Arg-319 contacts L-glutamate. ADP is bound at residue 336–338 (YFE). Mn(2+) is bound at residue Glu-338. Arg-340 serves as a coordination point for L-glutamate. The residue at position 343 (Ser-343) is a Phosphoserine.

Belongs to the glutamine synthetase family. As to quaternary structure, decamer; composed of two pentamers. Interacts with PALMD. Interacts with RHOJ. Interacts with BEST2; this interaction tethers a fraction of GLUL to the membrane, causing a decrease of cytosolic glutamine synthase (GS) activity and inhibits the chloride channel activity of BEST2 by affecting the gating at the aperture in the absence of intracellular glutamate. Requires Mg(2+) as cofactor. The cofactor is Mn(2+). Palmitoylated; undergoes autopalmitoylation. Post-translationally, acetylated by EP300/p300; acetylation is stimulated by increased glutamine levels and promotes ubiquitin-mediated proteasomal degradation. In terms of processing, ubiquitinated by ZNRF1. Ubiquitinated by the DCX (DDB1-CUL4-X-box) E3 ubiquitin-protein ligase complex called CRL4(CRBN), leading to proteasomal degradation.

It is found in the cytoplasm. The protein resides in the cytosol. It localises to the microsome. Its subcellular location is the mitochondrion. The protein localises to the cell membrane. It catalyses the reaction L-glutamate + NH4(+) + ATP = L-glutamine + ADP + phosphate + H(+). It carries out the reaction L-cysteinyl-[protein] + hexadecanoyl-CoA = S-hexadecanoyl-L-cysteinyl-[protein] + CoA. Glutamine synthetase activity is inhibited by methionine sulfoximine (MSO). Its function is as follows. Glutamine synthetase that catalyzes the ATP-dependent conversion of glutamate and ammonia to glutamine. Its role depends on tissue localization: in the brain, it regulates the levels of toxic ammonia and converts neurotoxic glutamate to harmless glutamine, whereas in the liver, it is one of the enzymes responsible for the removal of ammonia. Plays a key role in ammonium detoxification during erythropoiesis: the glutamine synthetase activity is required to remove ammonium generated by porphobilinogen deaminase (HMBS) during heme biosynthesis to prevent ammonium accumulation and oxidative stress. Essential for proliferation of fetal skin fibroblasts. Independently of its glutamine synthetase activity, required for endothelial cell migration during vascular development. Involved in angiogenesis by regulating membrane localization and activation of the GTPase RHOJ, possibly by promoting RHOJ palmitoylation. May act as a palmitoyltransferase for RHOJ: able to autopalmitoylate and then transfer the palmitoyl group to RHOJ. Plays a role in ribosomal 40S subunit biogenesis. Through the interaction with BEST2, inhibits BEST2 channel activity by affecting the gating at the aperture in the absence of intracellular L-glutamate, but sensitizes BEST2 to intracellular L-glutamate, which promotes the opening of BEST2 and thus relieves its inhibitory effect on BEST2. In Cricetulus griseus (Chinese hamster), this protein is Glutamine synthetase.